The following is a 59-amino-acid chain: Large ribosomal subunit protein bL32 (59 aa).

Positions M1–D59 are disordered. Basic residues-rich tracts occupy residues S9–H19 and R49–D59.

The protein belongs to the bacterial ribosomal protein bL32 family.

This Cupriavidus metallidurans (strain ATCC 43123 / DSM 2839 / NBRC 102507 / CH34) (Ralstonia metallidurans) protein is Large ribosomal subunit protein bL32.